The primary structure comprises 204 residues: Holliday junction branch migration complex subunit RuvA (204 aa).

The domain I stretch occupies residues 1–64 (MIGRLRGILL…EDAQLLYGFN (64 aa)). Positions 65 to 143 (TVKERALFRE…GWSAGDLFTP (79 aa)) are domain II. Positions 144-155 (FTDAAPVDSGST) are flexible linker. The segment at 156–204 (SSNSAEEEAVSALLALGYKPVQASKVVSQIAKPDMTSEQLIREALKSMV) is domain III.

This sequence belongs to the RuvA family. In terms of assembly, homotetramer. Forms an RuvA(8)-RuvB(12)-Holliday junction (HJ) complex. HJ DNA is sandwiched between 2 RuvA tetramers; dsDNA enters through RuvA and exits via RuvB. An RuvB hexamer assembles on each DNA strand where it exits the tetramer. Each RuvB hexamer is contacted by two RuvA subunits (via domain III) on 2 adjacent RuvB subunits; this complex drives branch migration. In the full resolvosome a probable DNA-RuvA(4)-RuvB(12)-RuvC(2) complex forms which resolves the HJ.

The protein localises to the cytoplasm. Its function is as follows. The RuvA-RuvB-RuvC complex processes Holliday junction (HJ) DNA during genetic recombination and DNA repair, while the RuvA-RuvB complex plays an important role in the rescue of blocked DNA replication forks via replication fork reversal (RFR). RuvA specifically binds to HJ cruciform DNA, conferring on it an open structure. The RuvB hexamer acts as an ATP-dependent pump, pulling dsDNA into and through the RuvAB complex. HJ branch migration allows RuvC to scan DNA until it finds its consensus sequence, where it cleaves and resolves the cruciform DNA. This chain is Holliday junction branch migration complex subunit RuvA, found in Vibrio vulnificus (strain CMCP6).